The chain runs to 653 residues: Leishmanolysin homolog (653 aa).

An N-terminal signal peptide occupies residues 1–44 (MHAPPTATRRSGPRRTHGIMARLVRLAAGVLVVTLVIGALTALS). Residues 45–113 (ADDAKTHPHK…ALAGDSAPDV (69 aa)) constitute a propeptide, activation peptide. 2 cysteine pairs are disulfide-bonded: Cys-138/Cys-155 and Cys-203/Cys-242. Position 276 (His-276) interacts with Zn(2+). Glu-277 is a catalytic residue. Residues His-280 and His-346 each coordinate Zn(2+). Cystine bridges form between Cys-326-Cys-398, Cys-405-Cys-468, Cys-418-Cys-437, Cys-427-Cys-502, Cys-479-Cys-524, Cys-529-Cys-579, and Cys-549-Cys-572. 2 N-linked (GlcNAc...) asparagine glycosylation sites follow: Asn-383 and Asn-409. Asn-569 is a glycosylation site (N-linked (GlcNAc...) asparagine). The tract at residues 590–631 (ESMTNSGSGSSRPAPVEPSGSGSGSSAATTAPSPTRDGSAAA) is disordered. Polar residues predominate over residues 591-600 (SMTNSGSGSS). Residues 607 to 631 (PSGSGSGSSAATTAPSPTRDGSAAA) show a composition bias toward low complexity. Ser-628 carries GPI-anchor amidated serine lipidation. A propeptide spans 629–653 (AAADRIAPRTAAVALLALAVAAACV) (removed in mature form).

This sequence belongs to the peptidase M8 family. It depends on Zn(2+) as a cofactor.

The protein localises to the cell membrane. It carries out the reaction Preference for hydrophobic residues at P1 and P1' and basic residues at P2' and P3'. A model nonapeptide is cleaved at -Ala-Tyr-|-Leu-Lys-Lys-.. Functionally, plays an integral role during the infection of macrophages in the mammalian host. This is Leishmanolysin homolog (gp63) from Crithidia fasciculata.